We begin with the raw amino-acid sequence, 426 residues long: Glutamate-1-semialdehyde 2,1-aminomutase (426 aa).

N6-(pyridoxal phosphate)lysine is present on Lys265.

The protein belongs to the class-III pyridoxal-phosphate-dependent aminotransferase family. HemL subfamily. Homodimer. Pyridoxal 5'-phosphate serves as cofactor.

It is found in the cytoplasm. The enzyme catalyses (S)-4-amino-5-oxopentanoate = 5-aminolevulinate. The protein operates within porphyrin-containing compound metabolism; protoporphyrin-IX biosynthesis; 5-aminolevulinate from L-glutamyl-tRNA(Glu): step 2/2. This Escherichia coli O7:K1 (strain IAI39 / ExPEC) protein is Glutamate-1-semialdehyde 2,1-aminomutase.